We begin with the raw amino-acid sequence, 171 residues long: Protein TraV (171 aa).

Residues 1-18 (MKQTSFFIPLLGTLLLYG) form the signal peptide. Residue C19 is the site of N-palmitoyl cysteine attachment. C19 carries S-diacylglycerol cysteine lipidation.

The protein resides in the cell outer membrane. Involved in F pilus assembly. Appears to facilitate the polymerization of inner membrane-located pilin subunits into extracellular F pilus filaments. This chain is Protein TraV (traV), found in Escherichia coli (strain K12).